Reading from the N-terminus, the 215-residue chain is FGFR1 oncogene partner 2 homolog (215 aa).

Residues 35 to 183 are a coiled coil; the sequence is LLNKRVEAMK…SGLRELLGIS (149 aa).

The protein belongs to the SIKE family.

The protein resides in the cytoplasm. The polypeptide is FGFR1 oncogene partner 2 homolog (fgfr1op2) (Danio rerio (Zebrafish)).